Here is a 208-residue protein sequence, read N- to C-terminus: Large ribosomal subunit protein uL3 (208 aa).

Residues 117–149 (GFQGAIKRHGQSRGPMAHGSRYHRRPGSMGPVA) are disordered.

This sequence belongs to the universal ribosomal protein uL3 family. In terms of assembly, part of the 50S ribosomal subunit. Forms a cluster with proteins L14 and L19.

Its function is as follows. One of the primary rRNA binding proteins, it binds directly near the 3'-end of the 23S rRNA, where it nucleates assembly of the 50S subunit. The sequence is that of Large ribosomal subunit protein uL3 from Exiguobacterium sp. (strain ATCC BAA-1283 / AT1b).